A 473-amino-acid polypeptide reads, in one-letter code: Photosystem II CP43 reaction center protein (473 aa).

Positions M1 to E14 are excised as a propeptide. An N-acetylthreonine modification is found at T15. T15 is modified (phosphothreonine). 5 helical membrane-spanning segments follow: residues L69–A93, L134–N155, K178–T200, K255–S275, and W291–A312. Residue E367 coordinates [CaMn4O5] cluster. A helical membrane pass occupies residues R447–P471.

It belongs to the PsbB/PsbC family. PsbC subfamily. As to quaternary structure, PSII is composed of 1 copy each of membrane proteins PsbA, PsbB, PsbC, PsbD, PsbE, PsbF, PsbH, PsbI, PsbJ, PsbK, PsbL, PsbM, PsbT, PsbX, PsbY, PsbZ, Psb30/Ycf12, at least 3 peripheral proteins of the oxygen-evolving complex and a large number of cofactors. It forms dimeric complexes. The cofactor is Binds multiple chlorophylls and provides some of the ligands for the Ca-4Mn-5O cluster of the oxygen-evolving complex. It may also provide a ligand for a Cl- that is required for oxygen evolution. PSII binds additional chlorophylls, carotenoids and specific lipids..

The protein resides in the plastid. Its subcellular location is the chloroplast thylakoid membrane. In terms of biological role, one of the components of the core complex of photosystem II (PSII). It binds chlorophyll and helps catalyze the primary light-induced photochemical processes of PSII. PSII is a light-driven water:plastoquinone oxidoreductase, using light energy to abstract electrons from H(2)O, generating O(2) and a proton gradient subsequently used for ATP formation. This Crucihimalaya wallichii (Rock-cress) protein is Photosystem II CP43 reaction center protein.